We begin with the raw amino-acid sequence, 183 residues long: Inosine/xanthosine triphosphatase (183 aa).

It belongs to the YjjX NTPase family. Homodimer. Mg(2+) is required as a cofactor. The cofactor is Mn(2+).

The catalysed reaction is XTP + H2O = XDP + phosphate + H(+). It carries out the reaction ITP + H2O = IDP + phosphate + H(+). In terms of biological role, phosphatase that hydrolyzes non-canonical purine nucleotides such as XTP and ITP to their respective diphosphate derivatives. Probably excludes non-canonical purines from DNA/RNA precursor pool, thus preventing their incorporation into DNA/RNA and avoiding chromosomal lesions. The chain is Inosine/xanthosine triphosphatase from Vibrio cholerae serotype O1 (strain ATCC 39315 / El Tor Inaba N16961).